We begin with the raw amino-acid sequence, 90 residues long: Long neurotoxin OH-34 (90 aa).

The first 20 residues, lysine 1–threonine 20, serve as a signal peptide directing secretion. Disulfide bonds link cysteine 23-cysteine 41, cysteine 34-cysteine 62, cysteine 47-cysteine 51, cysteine 66-cysteine 77, and cysteine 78-cysteine 83.

It belongs to the three-finger toxin family. Long-chain subfamily. Type II alpha-neurotoxin sub-subfamily. In terms of tissue distribution, expressed by the venom gland.

Its subcellular location is the secreted. Binds with high affinity to muscular (alpha-1/CHRNA1) and neuronal (alpha-7/CHRNA7) nicotinic acetylcholine receptor (nAChR) and inhibits acetylcholine from binding to the receptor, thereby impairing neuromuscular and neuronal transmission. In Ophiophagus hannah (King cobra), this protein is Long neurotoxin OH-34.